Reading from the N-terminus, the 289-residue chain is MITIKCKDTNLDPLPVKIGIIGGSGLDDPDILEQRQERVVETPYGEPSDALIEGEINGVQCVLLARHGRKHDIMPSNVNYRANIWALRDVGCTHLIVSTACGSLREEIKPGNLVVPHDFIDRTTKRLQTFYDGKAQSPRGVCHLPMFPAFSERTRNILLQAAKELEIPAHDKATIVTIEGPRFSSRSESHMFRQWGGDLINMTTCPEVVLAKEAGLLYGSVAIATDYDCWRMGCEGVNVQDVLRTFAENVIKVKKILVNAVGRIAKEDWSEDILNAKQCVCNNTMSGAM.

Residues serine 24, 66 to 67 (RH), and 99 to 100 (TA) contribute to the phosphate site. Methionine 202 is a substrate binding site. Position 203 (threonine 203) interacts with phosphate. Residue 226–228 (DYD) coordinates substrate.

The protein belongs to the PNP/MTAP phosphorylase family. MTAP subfamily. Homotrimer. As to expression, in embryos, expressed in the fat body and visceral mesoderm.

The protein localises to the cytoplasm. The protein resides in the nucleus. The catalysed reaction is S-methyl-5'-thioadenosine + phosphate = 5-(methylsulfanyl)-alpha-D-ribose 1-phosphate + adenine. The protein operates within amino-acid biosynthesis; L-methionine biosynthesis via salvage pathway; S-methyl-5-thio-alpha-D-ribose 1-phosphate from S-methyl-5'-thioadenosine (phosphorylase route): step 1/1. Catalyzes the reversible phosphorylation of S-methyl-5'-thioadenosine (MTA) to adenine and 5-methylthioribose-1-phosphate. Involved in the breakdown of MTA, a major by-product of polyamine biosynthesis. Responsible for the first step in the methionine salvage pathway after MTA has been generated from S-adenosylmethionine. Has broad substrate specificity with 6-aminopurine nucleosides as preferred substrates. This is S-methyl-5'-thioadenosine phosphorylase (Mtap) from Drosophila melanogaster (Fruit fly).